A 196-amino-acid chain; its full sequence is Golgi to ER traffic protein 1 (196 aa).

Topologically, residues 1–10 (MFLDLHPYTI) are lumenal. A helical transmembrane segment spans residues 11–30 (LVSIFIILLVKQIVGRIGKS). The Cytoplasmic portion of the chain corresponds to 31-114 (TIQEFVWLLY…SIDKLANVLL (84 aa)). Residues 76–114 (AKWTKLNRQADKLTSEIQKLNEEIRQSKASIDKLANVLL) adopt a coiled-coil conformation. A helical membrane pass occupies residues 115–135 (MVLTTLPIWVARIFFRKTHLF). At 136–159 (YLRSGIFPRYIEWVLALPFFPSGA) the chain is on the lumenal side. The helical transmembrane segment at 160–176 (VGLTVWMFAANSVIHNV) threads the bilayer. Over 177–196 (ISLVSFAFEKRVEKPVRQKK) the chain is Cytoplasmic.

Belongs to the WRB/GET1 family. In terms of assembly, component of the Golgi to ER traffic (GET) complex, which is composed of GET1, GET2 and GET3. Within the complex, GET1 and GET2 form a heterotetramer which is stabilized by phosphatidylinositol binding and which binds to the GET3 homodimer.

The protein resides in the endoplasmic reticulum membrane. The protein localises to the golgi apparatus membrane. In terms of biological role, required for the post-translational delivery of tail-anchored (TA) proteins to the endoplasmic reticulum. Together with GET2, acts as a membrane receptor for soluble GET3, which recognizes and selectively binds the transmembrane domain of TA proteins in the cytosol. The GET complex cooperates with the HDEL receptor ERD2 to mediate the ATP-dependent retrieval of resident ER proteins that contain a C-terminal H-D-E-L retention signal from the Golgi to the ER. The polypeptide is Golgi to ER traffic protein 1 (Candida tropicalis (strain ATCC MYA-3404 / T1) (Yeast)).